Consider the following 295-residue polypeptide: NAD kinase (295 aa).

The active-site Proton acceptor is the D72. NAD(+)-binding positions include 72-73 (DG), 146-147 (ND), R157, K174, D176, 187-192 (TAYALS), and Q247.

This sequence belongs to the NAD kinase family. A divalent metal cation serves as cofactor.

The protein resides in the cytoplasm. The catalysed reaction is NAD(+) + ATP = ADP + NADP(+) + H(+). Involved in the regulation of the intracellular balance of NAD and NADP, and is a key enzyme in the biosynthesis of NADP. Catalyzes specifically the phosphorylation on 2'-hydroxyl of the adenosine moiety of NAD to yield NADP. The protein is NAD kinase of Ectopseudomonas mendocina (strain ymp) (Pseudomonas mendocina).